Here is a 237-residue protein sequence, read N- to C-terminus: DCN1-like protein 5 (237 aa).

Residue serine 41 is modified to Phosphoserine; by IKKA. One can recognise a DCUN1 domain in the interval 46–232 (FSRKKCLAWF…LLDEFVEWQK (187 aa)).

As to quaternary structure, part of a complex that contains DCUN1D5, CUL1 and RBX1; this interaction is bridged by CUL1. Interacts (via the DCUN1 domain) with the unneddylated cullins: interacts with CUL1, CUL2, CUL3, CUL4A, CUL4B and CUL5; these interactions promote the cullin neddylation and the identity of the cullin dictates the affinity of the interaction. Interacts (via DCUN1 domain) with UBE2M (N-terminally acetylated form) and probably with UBE2F (N-terminally acetylated form). May also interact with regulators or subunits of cullin-RING ligases such as RBX1, RNF7, ELOB and DDB1; these interactions are bridged by cullins. Interacts with CAND1; this interaction is bridged by cullins and strongly inhibits the neddylation of cullins. These CAND-cullin-DCNL complexes can only be neddylated in the presence of a substrate adapter. Post-translationally, phosphorylation at Ser-41 is independent of cullin's interaction. Phosphorylated in response to both TICAM1 and MYD88 dependent Toll-like receptor (TLR) pathway activation. Phosphorylated in response to IL1B stimulation. As to expression, highly expressed in testis. Lower levels of expression in skin, thymus, spleen, lymph nodes, lung, brain, heart, skeletal muscles, kidney, liver an ovary.

It localises to the nucleus. It is found in the cytoplasm. Its subcellular location is the cytoskeleton. The protein resides in the spindle. In terms of biological role, contributes to the neddylation of all cullins by transferring NEDD8 from N-terminally acetylated NEDD8-conjugating E2s enzyme to different cullin C-terminal domain-RBX complexes which is necessary for the activation of cullin-RING E3 ubiquitin ligases (CRLs). May play a role in DNA damage response and may participate in cell proliferation and anchorage-independent cell growth. This Mus musculus (Mouse) protein is DCN1-like protein 5.